The chain runs to 96 residues: Frd operon uncharacterized protein C (96 aa).

This sequence belongs to the HupF/HypC family.

The chain is Frd operon uncharacterized protein C from Proteus vulgaris.